Here is a 271-residue protein sequence, read N- to C-terminus: Cytosolic Fe-S cluster assembly factor NUBP2 (271 aa).

Methionine 1 is subject to N-acetylmethionine. Residue 22–29 coordinates ATP; it reads GKGGVGKS. [4Fe-4S] cluster contacts are provided by cysteine 196 and cysteine 199.

The protein belongs to the Mrp/NBP35 ATP-binding proteins family. NUBP2/CFD1 subfamily. In terms of assembly, heterotetramer of 2 NUBP1 and 2 NUBP2 chains. Interacts with KIFC1. Interacts with NUBP1. The cofactor is [4Fe-4S] cluster.

The protein resides in the nucleus. It is found in the cytoplasm. Its subcellular location is the cytoskeleton. The protein localises to the microtubule organizing center. It localises to the centrosome. The protein resides in the cilium axoneme. It is found in the centriole. Its function is as follows. Component of the cytosolic iron-sulfur (Fe/S) protein assembly (CIA) machinery. Required for maturation of extramitochondrial Fe-S proteins. The NUBP1-NUBP2 heterotetramer forms a Fe-S scaffold complex, mediating the de novo assembly of an Fe-S cluster and its transfer to target apoproteins. Negatively regulates cilium formation and structure. In Bos taurus (Bovine), this protein is Cytosolic Fe-S cluster assembly factor NUBP2.